The chain runs to 163 residues: MLLAIKDFFNSLLLKELFKGMALTGRYLFARKITVQFPEEKTPMSPRFRGLHALRRYPNGEERCIACKLCEAVCPALAISIESDVRNDGTRRTTRYDIDLTKCIFCGFCEEACPVDAIVETHILEYHGEKRGDLYFTKDMLLAVGDRYEPQIAAAKAADAKYR.

4Fe-4S ferredoxin-type domains lie at 54-84 and 94-123; these read LRRY…IESD and TRYD…ETHI. Positions 64, 67, 70, 74, 103, 106, 109, and 113 each coordinate [4Fe-4S] cluster.

Belongs to the complex I 23 kDa subunit family. In terms of assembly, NDH-1 is composed of 14 different subunits. Subunits NuoA, H, J, K, L, M, N constitute the membrane sector of the complex. [4Fe-4S] cluster is required as a cofactor.

The protein resides in the cell inner membrane. It catalyses the reaction a quinone + NADH + 5 H(+)(in) = a quinol + NAD(+) + 4 H(+)(out). NDH-1 shuttles electrons from NADH, via FMN and iron-sulfur (Fe-S) centers, to quinones in the respiratory chain. The immediate electron acceptor for the enzyme in this species is believed to be ubiquinone. Couples the redox reaction to proton translocation (for every two electrons transferred, four hydrogen ions are translocated across the cytoplasmic membrane), and thus conserves the redox energy in a proton gradient. In Cupriavidus metallidurans (strain ATCC 43123 / DSM 2839 / NBRC 102507 / CH34) (Ralstonia metallidurans), this protein is NADH-quinone oxidoreductase subunit I.